The primary structure comprises 479 residues: Long-chain alcohol oxidase (479 aa).

The FAD-binding PCMH-type domain maps to 14 to 183 (QILRPSAAYT…LAVRIRCREQ (170 aa)). The residue at position 49 (His49) is a Pros-8alpha-FAD histidine. Residues Thr113, Gly116, 120–123 (TGTH), and Ile173 contribute to the FAD site. The helical transmembrane segment at 241 to 258 (LYWLGTMDYGLILQILFL) threads the bilayer. FAD-binding residues include Arg369 and His425.

The protein belongs to the oxygen-dependent FAD-linked oxidoreductase family. Requires FAD as cofactor.

Its subcellular location is the cell membrane. It carries out the reaction a long-chain primary fatty alcohol + O2 = a long-chain fatty aldehyde + H2O2. It catalyses the reaction dodecan-1-ol + O2 = dodecanal + H2O2. The catalysed reaction is tetradecan-1-ol + O2 = tetradecanal + H2O2. The enzyme catalyses octan-1-ol + O2 = octanal + H2O2. It carries out the reaction decan-1-ol + O2 = decanal + H2O2. Its pathway is lipid metabolism; fatty acid metabolism. Its function is as follows. In vitro catalyzes the oxidation of a range of fatty alcohols having a carbon chain length of six and above, with a reduction of O2 to H2O2. Shows the highest activity with 1-dodecanol. Is likely involved in lipid metabolism. This is Long-chain alcohol oxidase from Uncultured marine euryarchaeote.